Here is a 119-residue protein sequence, read N- to C-terminus: uncharacterized protein (119 aa).

An intrachain disulfide couples Cys9 to Cys12.

The protein belongs to the ArsC family.

This is an uncharacterized protein from Streptomyces viridochromogenes.